Reading from the N-terminus, the 214-residue chain is Putative archaetidylserine decarboxylase proenzyme (214 aa).

The active-site Schiff-base intermediate with substrate; via pyruvic acid is Ser180. Ser180 bears the Pyruvic acid (Ser); by autocatalysis mark.

The protein belongs to the phosphatidylserine decarboxylase family. PSD-A subfamily. Heterodimer of a large membrane-associated beta subunit and a small pyruvoyl-containing alpha subunit. Requires pyruvate as cofactor. Post-translationally, is synthesized initially as an inactive proenzyme. Formation of the active enzyme involves a self-maturation process in which the active site pyruvoyl group is generated from an internal serine residue via an autocatalytic post-translational modification. Two non-identical subunits are generated from the proenzyme in this reaction, and the pyruvate is formed at the N-terminus of the alpha chain, which is derived from the carboxyl end of the proenzyme. The post-translation cleavage follows an unusual pathway, termed non-hydrolytic serinolysis, in which the side chain hydroxyl group of the serine supplies its oxygen atom to form the C-terminus of the beta chain, while the remainder of the serine residue undergoes an oxidative deamination to produce ammonia and the pyruvoyl prosthetic group on the alpha chain.

The protein localises to the cell membrane. The catalysed reaction is archaetidylserine + H(+) = archaetidylethanolamine + CO2. In terms of biological role, catalyzes the formation of archaetidylethanolamine (PtdEtn) from archaetidylserine (PtdSer). This Methanopyrus kandleri (strain AV19 / DSM 6324 / JCM 9639 / NBRC 100938) protein is Putative archaetidylserine decarboxylase proenzyme.